Here is a 481-residue protein sequence, read N- to C-terminus: Dynein axonemal assembly factor 8 (481 aa).

4 disordered regions span residues 70 to 91 (DESG…LVPG), 131 to 233 (LDTK…EGRP), 306 to 397 (TWKV…PVAS), and 415 to 454 (RAFR…KKHI). Phosphoserine is present on residues serine 83, serine 145, and serine 147. Positions 144–155 (GSQSPPWSSQGE) are enriched in polar residues. Positions 163-176 (GKLKTEPSDTDFKN) are enriched in basic and acidic residues. Positions 177-188 (SAKRRALRRERR) are enriched in basic residues. Residues 198–211 (KVTQAAQNPASGDQ) are compositionally biased toward polar residues. Residues 310 to 322 (SADKLQDTEEQVA) are compositionally biased toward basic and acidic residues. A compositionally biased stretch (polar residues) spans 323–336 (RTRSASAESGFQTE). Serine 328 bears the Phosphoserine mark. Basic and acidic residues-rich tracts occupy residues 337 to 349 (RVQK…RLKT) and 359 to 380 (RLTE…HSSS).

It localises to the dynein axonemal particle. The protein localises to the cytoplasm. Functionally, in cyliated cells, dynein axonemal particle-specific protein required for deployment of ODA to the axoneme. Interacts with outer dynein arm (ODA) subunits. The protein is Dynein axonemal assembly factor 8 (Dnaaf8) of Rattus norvegicus (Rat).